The sequence spans 437 residues: GTPase Obg (437 aa).

Positions 2–160 (SMFLDTAKIS…RQLELELKIL (159 aa)) constitute an Obg domain. The OBG-type G domain maps to 161-338 (ADVGLVGFPS…LLEATAELLA (178 aa)). Residues 167-174 (GFPSVGKS), 192-196 (FTTIV), 214-217 (DLPG), 284-287 (NKMD), and 319-321 (SSL) each bind GTP. Mg(2+) contacts are provided by Ser-174 and Thr-194. Residues 359–437 (GFAKTEKDFE…IGKFEFEFVD (79 aa)) form the OCT domain.

Belongs to the TRAFAC class OBG-HflX-like GTPase superfamily. OBG GTPase family. In terms of assembly, monomer. Mg(2+) serves as cofactor.

The protein localises to the cytoplasm. In terms of biological role, an essential GTPase which binds GTP, GDP and possibly (p)ppGpp with moderate affinity, with high nucleotide exchange rates and a fairly low GTP hydrolysis rate. Plays a role in control of the cell cycle, stress response, ribosome biogenesis and in those bacteria that undergo differentiation, in morphogenesis control. In Streptococcus pyogenes serotype M2 (strain MGAS10270), this protein is GTPase Obg.